Reading from the N-terminus, the 202-residue chain is LexA repressor (202 aa).

Residues 28-48 (RAEIAMRLGFRSPNAAEEHLK) constitute a DNA-binding region (H-T-H motif). Catalysis depends on for autocatalytic cleavage activity residues Ser119 and Lys156.

The protein belongs to the peptidase S24 family. As to quaternary structure, homodimer.

It carries out the reaction Hydrolysis of Ala-|-Gly bond in repressor LexA.. Functionally, represses a number of genes involved in the response to DNA damage (SOS response), including recA and lexA. Binds to the 16 bp palindromic sequence 5'-CTGTATATATATACAG-3'. In the presence of single-stranded DNA, RecA interacts with LexA causing an autocatalytic cleavage which disrupts the DNA-binding part of LexA, leading to derepression of the SOS regulon and eventually DNA repair. The polypeptide is LexA repressor (Serratia proteamaculans (strain 568)).